Reading from the N-terminus, the 360-residue chain is Phospho-N-acetylmuramoyl-pentapeptide-transferase (360 aa).

10 helical membrane-spanning segments follow: residues 26 to 46 (AILS…IMIK), 70 to 90 (GTPT…ILLW), 94 to 114 (SNPY…VGFV), 132 to 152 (WKYF…YAYG), 168 to 188 (VMPQ…VGTS), 199 to 219 (GLAI…AWAT), 236 to 256 (ASEL…FLWF), 263 to 283 (VFMG…IAVL), 288 to 308 (LVLV…ILQV), and 338 to 358 (VIVR…ATLK).

The protein belongs to the glycosyltransferase 4 family. MraY subfamily. It depends on Mg(2+) as a cofactor.

It is found in the cell inner membrane. It carries out the reaction UDP-N-acetyl-alpha-D-muramoyl-L-alanyl-gamma-D-glutamyl-meso-2,6-diaminopimeloyl-D-alanyl-D-alanine + di-trans,octa-cis-undecaprenyl phosphate = di-trans,octa-cis-undecaprenyl diphospho-N-acetyl-alpha-D-muramoyl-L-alanyl-D-glutamyl-meso-2,6-diaminopimeloyl-D-alanyl-D-alanine + UMP. It participates in cell wall biogenesis; peptidoglycan biosynthesis. Its function is as follows. Catalyzes the initial step of the lipid cycle reactions in the biosynthesis of the cell wall peptidoglycan: transfers peptidoglycan precursor phospho-MurNAc-pentapeptide from UDP-MurNAc-pentapeptide onto the lipid carrier undecaprenyl phosphate, yielding undecaprenyl-pyrophosphoryl-MurNAc-pentapeptide, known as lipid I. This chain is Phospho-N-acetylmuramoyl-pentapeptide-transferase, found in Vibrio parahaemolyticus serotype O3:K6 (strain RIMD 2210633).